We begin with the raw amino-acid sequence, 306 residues long: Leucine-rich repeat-containing protein 75B (306 aa).

Residues 1–22 (MGARLGRRARADAPAAPSAGPA) are disordered. Residues 12 to 22 (DAPAAPSAGPA) are compositionally biased toward low complexity. LRR repeat units follow at residues 173-186 (LVVL…LSDE) and 198-211 (LPRL…GNRL).

It belongs to the LRRC75 family.

May suppress myogenic differentiation by modulating MYOG expression and Erk1/2 signaling. This is Leucine-rich repeat-containing protein 75B from Mus musculus (Mouse).